A 411-amino-acid chain; its full sequence is Small ribosomal subunit protein bS1c (411 aa).

The N-terminal 41 residues, 1–41 (MASLAQQLAGGLRCPPLSNSNLSKPFSPKHTLKPRFSPIVS), are a transit peptide targeting the chloroplast. S1 motif domains lie at 96–166 (GSRV…LSLR), 184–248 (DVVV…MSNR), and 261–329 (GSVV…LSTK).

This sequence belongs to the bacterial ribosomal protein bS1 family. As to quaternary structure, component of the chloroplast small ribosomal subunit (SSU). Mature 70S chloroplast ribosomes of higher plants consist of a small (30S) and a large (50S) subunit. The 30S small subunit contains 1 molecule of ribosomal RNA (16S rRNA) and 24 different proteins. The 50S large subunit contains 3 rRNA molecules (23S, 5S and 4.5S rRNA) and 33 different proteins.

Its subcellular location is the plastid. The protein resides in the chloroplast. Component of the chloroplast ribosome (chloro-ribosome), a dedicated translation machinery responsible for the synthesis of chloroplast genome-encoded proteins, including proteins of the transcription and translation machinery and components of the photosynthetic apparatus. Actively engaged in the initiation complex formation via a strong mRNA-binding activity. Possesses a poly(A)-binding activity which might play a role as a control element in chloroplast mRNA translation. The protein is Small ribosomal subunit protein bS1c (RPS1) of Spinacia oleracea (Spinach).